Reading from the N-terminus, the 493-residue chain is Ribose import ATP-binding protein RbsA (493 aa).

ABC transporter domains follow at residues 5-241 (LKIS…VGRR) and 252-491 (EKGE…AAAI). 37 to 44 (GENGAGKS) provides a ligand contact to ATP.

It belongs to the ABC transporter superfamily. Ribose importer (TC 3.A.1.2.1) family. In terms of assembly, the complex is composed of an ATP-binding protein (RbsA), two transmembrane proteins (RbsC) and a solute-binding protein (RbsB).

It is found in the cell inner membrane. The enzyme catalyses D-ribose(out) + ATP + H2O = D-ribose(in) + ADP + phosphate + H(+). Functionally, part of the ABC transporter complex RbsABC involved in ribose import. Responsible for energy coupling to the transport system. This Haemophilus influenzae (strain 86-028NP) protein is Ribose import ATP-binding protein RbsA.